The sequence spans 145 residues: MDKRITLIGSKIAKTGNEFIYCGVLEECSECRFKKICHDGLIVGKRYRIVSVRSAKHPCIAYGDGVKVIEVEPSNNFTILIESKKALEGLTLSHSDIQCNNILCKYYNLCHSEGMPEKYKIMELHEKIKCPKGNSLIKATVSTIN.

Belongs to the UPF0179 family.

This Methanococcus aeolicus (strain ATCC BAA-1280 / DSM 17508 / OCM 812 / Nankai-3) protein is UPF0179 protein Maeo_1037.